A 377-amino-acid polypeptide reads, in one-letter code: N5-carboxyaminoimidazole ribonucleotide synthase (377 aa).

ATP is bound by residues R93, K133, 138-144, 175-178, E183, H206, and 257-258; these read GYDGRGQ, EEFV, and NE. Residues 97-287 form the ATP-grasp domain; it reads KTLLDHAGVR…QFENHLRAVC (191 aa).

The protein belongs to the PurK/PurT family. Homodimer.

It catalyses the reaction 5-amino-1-(5-phospho-beta-D-ribosyl)imidazole + hydrogencarbonate + ATP = 5-carboxyamino-1-(5-phospho-D-ribosyl)imidazole + ADP + phosphate + 2 H(+). It participates in purine metabolism; IMP biosynthesis via de novo pathway; 5-amino-1-(5-phospho-D-ribosyl)imidazole-4-carboxylate from 5-amino-1-(5-phospho-D-ribosyl)imidazole (N5-CAIR route): step 1/2. Its function is as follows. Catalyzes the ATP-dependent conversion of 5-aminoimidazole ribonucleotide (AIR) and HCO(3)(-) to N5-carboxyaminoimidazole ribonucleotide (N5-CAIR). The sequence is that of N5-carboxyaminoimidazole ribonucleotide synthase from Vibrio vulnificus (strain YJ016).